A 135-amino-acid polypeptide reads, in one-letter code: Bacilliredoxin CHU_0972 (135 aa).

The protein belongs to the bacilliredoxin family.

The chain is Bacilliredoxin CHU_0972 from Cytophaga hutchinsonii (strain ATCC 33406 / DSM 1761 / CIP 103989 / NBRC 15051 / NCIMB 9469 / D465).